A 309-amino-acid chain; its full sequence is Aspartate carbamoyltransferase catalytic subunit (309 aa).

Carbamoyl phosphate-binding residues include arginine 57 and threonine 58. Lysine 86 lines the L-aspartate pocket. The carbamoyl phosphate site is built by arginine 107, histidine 135, and glutamine 138. Residues arginine 168 and arginine 228 each coordinate L-aspartate. 2 residues coordinate carbamoyl phosphate: leucine 267 and proline 268.

The protein belongs to the aspartate/ornithine carbamoyltransferase superfamily. ATCase family. As to quaternary structure, heterooligomer of catalytic and regulatory chains.

The catalysed reaction is carbamoyl phosphate + L-aspartate = N-carbamoyl-L-aspartate + phosphate + H(+). It functions in the pathway pyrimidine metabolism; UMP biosynthesis via de novo pathway; (S)-dihydroorotate from bicarbonate: step 2/3. Catalyzes the condensation of carbamoyl phosphate and aspartate to form carbamoyl aspartate and inorganic phosphate, the committed step in the de novo pyrimidine nucleotide biosynthesis pathway. This is Aspartate carbamoyltransferase catalytic subunit from Cenarchaeum symbiosum (strain A).